Reading from the N-terminus, the 512-residue chain is Spermatocyte protein spe-8 (512 aa).

The interval 1–85 (MRSKSSEGDL…PKPSSDNNNS (85 aa)) is disordered. Basic and acidic residues predominate over residues 15-41 (TQSREDKETTATYSEDTKPETQKERNA). Pro residues predominate over residues 68–78 (EAPPPPPPPKP). The region spanning 114 to 205 (FYHGFMGRNE…YEGMTLICGL (92 aa)) is the SH2 domain. One can recognise a Protein kinase domain in the interval 217–485 (VTLNKKLGEG…KEEVGFHEIE (269 aa)). Residues 223-231 (LGEGQFGEV) and K250 contribute to the ATP site. D344 serves as the catalytic Proton acceptor.

It belongs to the protein kinase superfamily. Tyr protein kinase family. Fes/fps subfamily. Expression is restricted to male germline.

The protein resides in the cell membrane. It localises to the cytoplasm. The catalysed reaction is L-tyrosyl-[protein] + ATP = O-phospho-L-tyrosyl-[protein] + ADP + H(+). In terms of biological role, probable non-receptor tyrosine-protein kinase which plays a role in spermatid activation (spermiogenesis) in hermaphrodites. The polypeptide is Spermatocyte protein spe-8 (Caenorhabditis elegans).